We begin with the raw amino-acid sequence, 732 residues long: Catalase-peroxidase (732 aa).

An N-terminal signal peptide occupies residues 1–45 (MDTKVDNAGKCPVVHTHTAHGGRSNRDWWPNQLNLRILHQNSSLS). Positions 97-220 (WHSAGTYRTG…LSAVQMGLIY (124 aa)) form a cross-link, tryptophyl-tyrosyl-methioninium (Trp-Tyr) (with M-246). The Proton acceptor role is filled by His98. Residues 220 to 246 (YVNPEGPNGNPDPLAAARDIRETFARM) constitute a cross-link (tryptophyl-tyrosyl-methioninium (Tyr-Met) (with W-97)). His261 provides a ligand contact to heme b.

Belongs to the peroxidase family. Peroxidase/catalase subfamily. As to quaternary structure, homodimer or homotetramer. The cofactor is heme b. In terms of processing, formation of the three residue Trp-Tyr-Met cross-link is important for the catalase, but not the peroxidase activity of the enzyme.

The catalysed reaction is H2O2 + AH2 = A + 2 H2O. It carries out the reaction 2 H2O2 = O2 + 2 H2O. Its function is as follows. Bifunctional enzyme with both catalase and broad-spectrum peroxidase activity. The chain is Catalase-peroxidase from Rhizobium rhizogenes (strain K84 / ATCC BAA-868) (Agrobacterium radiobacter).